Consider the following 702-residue polypeptide: MSESQLSLTPVKRSFQFGQHQVTLETGGVARQADGAVLVDMADTVVLVTVVGRKDPAAARDFLPLTVNYQERTYAAGRIPGGFFKREGRPSEKETLTCRLIDRPIRPLFPEGFRQEVQVIATVLSLNDEVDADIPAMIGTSAALALSGIPFEGPIGACRVGHLDGEFVLNPTFSQTAESDLDLVVAGTQDAVLMVESEANLLPESTMLDAVLYGHEQMQVAIDTINDLAAEAGKPRWDWQPPAKNESLDSAVAELVRSDLEAAYQIADKQERSERVGALRDKAVEALADEEREGWGAGDVGEAFKTLEKKIVRGRILAGHPRIDGRDNQTVRPLNVQAGVLPRTHGSAIFTRGETQAIVVSTLGTGRDAQVIDALEGERREPFMLHYNFPPYCVGETGFIGTPKRREIGHGKLAKRGVEAVMPSDEEFPYVIRVVSEVTESNGSSSMATVCGTSLSLMDAGVPLKAQVAGIAMGLIKEGDEFAVLTDILGDEDHLGDMDFKVAGSKDGVTALQMDIKIDGITREIMEQALDQARSGRLHILEQMNQVIDKPREQMSEYAPRLLTMRIDPERIRDVIGKGGATIRGLTEETGTNIDISDEGVVTIASADKAAAEEAKKRIELLTADVEVGKVYDGKVAKLMDFGAFVNILPGRDGLVHISQISNNRVENVADELSEGDSVRVKVLEVDRQGRIRLSMKAVEEE.

Residues Asp-493 and Asp-499 each contribute to the Mg(2+) site. In terms of domain architecture, KH spans 560–619 (PRLLTMRIDPERIRDVIGKGGATIRGLTEETGTNIDISDEGVVTIASADKAAAEEAKKRI). The S1 motif domain maps to 629–697 (GKVYDGKVAK…RQGRIRLSMK (69 aa)).

Belongs to the polyribonucleotide nucleotidyltransferase family. As to quaternary structure, component of the RNA degradosome, which is a multiprotein complex involved in RNA processing and mRNA degradation. The cofactor is Mg(2+).

The protein resides in the cytoplasm. It carries out the reaction RNA(n+1) + phosphate = RNA(n) + a ribonucleoside 5'-diphosphate. In terms of biological role, involved in mRNA degradation. Catalyzes the phosphorolysis of single-stranded polyribonucleotides processively in the 3'- to 5'-direction. The chain is Polyribonucleotide nucleotidyltransferase from Halorhodospira halophila (strain DSM 244 / SL1) (Ectothiorhodospira halophila (strain DSM 244 / SL1)).